Consider the following 357-residue polypeptide: Dynein axonemal assembly factor 10 (357 aa).

6 WD repeats span residues 63–105 (EKAK…VPVY), 115–154 (NTIDGVGGLGIGEGAPEIVTGSRDGTVKVWDPRQKDDPVA), 162–205 (ENKR…LRWE), 207–249 (NIKN…PTKG), 257–297 (AHKS…QRSK), and 319–357 (LSTQPVSSLDWSPDKRGLCICSSFDQMVRVLIVTKLHKI).

In terms of assembly, component of the PAQosome complex which is responsible for the biogenesis of several protein complexes and which consists of R2TP complex members RUVBL1, RUVBL2, RPAP3 and PIH1D1, URI complex members PFDN2, PFDN6, PDRG1, UXT and URI1 as well as ASDURF, POLR2E and DNAAF10/WDR92. Interacts with PIH1D1; the interaction associates DNAAF10 with the R2TP complex. Interacts with several dynein axonemal assembly factors.

The protein resides in the dynein axonemal particle. In terms of biological role, key assembly factor specifically required for the stability of axonemal dynein heavy chains in cytoplasm. The polypeptide is Dynein axonemal assembly factor 10 (DNAAF10) (Bos taurus (Bovine)).